We begin with the raw amino-acid sequence, 128 residues long: Cytochrome c-type biogenesis protein CcmE (128 aa).

The Cytoplasmic portion of the chain corresponds to 1-8; sequence MQKIVRNR. A helical; Signal-anchor for type II membrane protein transmembrane segment spans residues 9–29; the sequence is LIKIIICFCSACLGISIILYN. Topologically, residues 30-128 are periplasmic; the sequence is LEKNIIFFFP…KHDENYRPPS (99 aa). Heme contacts are provided by H120 and Y124.

Belongs to the CcmE/CycJ family.

It is found in the cell inner membrane. Its function is as follows. Heme chaperone required for the biogenesis of c-type cytochromes. Transiently binds heme delivered by CcmC and transfers the heme to apo-cytochromes in a process facilitated by CcmF and CcmH. The polypeptide is Cytochrome c-type biogenesis protein CcmE (Rickettsia prowazekii (strain Madrid E)).